The primary structure comprises 505 residues: MSYPGYPPPPGGYPPAAPGGGPWGGAAYPPPPSMPPIGLDNVATYAGQFNQDYLSGMAANMSGTFGGANMPNLYPGAPGAGYPPVPPGGFGQPPSAQQPVPPYGMYPPPGGNPPSRMPSYPPYPGAPVPGQPMPPPGQQPPGAYPGQPPVTYPGQPPVPLPGQQQPVPSYPGYPGSGTVTPAVPPTQFGSRGTITDAPGFDPLRDAEVLRKAMKGFGTDEQAIIDCLGSRSNKQRQQILLSFKTAYGKDLIKDLKSELSGNFEKTILALMKTPVLFDIYEIKEAIKGVGTDEACLIEILASRSNEHIRELNRAYKAEFKKTLEEAIRSDTSGHFQRLLISLSQGNRDESTNVDMSLAQRDAQELYAAGENRLGTDESKFNAVLCSRSRAHLVAVFNEYQRMTGRDIEKSICREMSGDLEEGMLAVVKCLKNTPAFFAERLNKAMRGAGTKDRTLIRIMVSRSETDLLDIRSEYKRMYGKSLYHDISGDTSGDYRKILLKICGGND.

Composition is skewed to pro residues over residues 1–17 (MSYPGYPPPPGGYPPAA) and 99–160 (PVPP…PVPL). 2 disordered regions span residues 1–38 (MSYPGYPPPPGGYPPAAPGGGPWGGAAYPPPPSMPPIG) and 84–199 (PVPP…DAPG). Residues 161–177 (PGQQQPVPSYPGYPGSG) show a composition bias toward low complexity. 4 Annexin repeats span residues 200–271 (FDPL…ALMK), 272–343 (TPVL…SLSQ), 355–427 (SLAQ…AVVK), and 431–502 (NTPA…KICG). N6-acetyllysine is present on residues Lys248 and Lys255. Lys479 carries the post-translational modification N6-acetyllysine.

The protein belongs to the annexin family. In terms of assembly, interacts with S100A6. Interacts with PDCD6 in a calcium-dependent manner. Interacts with KIF23 during cytokinesis.

It localises to the cytoplasm. Its subcellular location is the melanosome. The protein localises to the nucleus envelope. The protein resides in the nucleus. It is found in the nucleoplasm. It localises to the cytoskeleton. Its subcellular location is the spindle. In terms of biological role, binds specifically to calcyclin in a calcium-dependent manner. Required for midbody formation and completion of the terminal phase of cytokinesis. The sequence is that of Annexin A11 (ANXA11) from Homo sapiens (Human).